A 72-amino-acid chain; its full sequence is Translation initiation factor IF-1 (72 aa).

Positions 1-72 constitute an S1-like domain; the sequence is MAKEESIKMN…SKGRITYRAR (72 aa).

The protein belongs to the IF-1 family. As to quaternary structure, component of the 30S ribosomal translation pre-initiation complex which assembles on the 30S ribosome in the order IF-2 and IF-3, IF-1 and N-formylmethionyl-tRNA(fMet); mRNA recruitment can occur at any time during PIC assembly.

Its subcellular location is the cytoplasm. In terms of biological role, one of the essential components for the initiation of protein synthesis. Stabilizes the binding of IF-2 and IF-3 on the 30S subunit to which N-formylmethionyl-tRNA(fMet) subsequently binds. Helps modulate mRNA selection, yielding the 30S pre-initiation complex (PIC). Upon addition of the 50S ribosomal subunit IF-1, IF-2 and IF-3 are released leaving the mature 70S translation initiation complex. This Alkalilimnicola ehrlichii (strain ATCC BAA-1101 / DSM 17681 / MLHE-1) protein is Translation initiation factor IF-1.